We begin with the raw amino-acid sequence, 100 residues long: MTKVTPTSLADLIRRPIVTEKATLLLENNQYVFEVDPRATKPQIKAAIEELFEVKVTGISTSNMPIKKKRIGKFIGHKAQYKRATVTLAPEFTINLFPEV.

Belongs to the universal ribosomal protein uL23 family. As to quaternary structure, part of the 50S ribosomal subunit. Contacts protein L29, and trigger factor when it is bound to the ribosome.

Its function is as follows. One of the early assembly proteins it binds 23S rRNA. One of the proteins that surrounds the polypeptide exit tunnel on the outside of the ribosome. Forms the main docking site for trigger factor binding to the ribosome. The sequence is that of Large ribosomal subunit protein uL23 from Acaryochloris marina (strain MBIC 11017).